We begin with the raw amino-acid sequence, 210 residues long: dITP/XTP pyrophosphatase (210 aa).

19-24 (SNNPGK) contacts substrate. The Mg(2+) site is built by Asp-51 and Asp-80. Asp-80 (proton acceptor) is an active-site residue. Residues Ser-81, 166–169 (FGYD), Lys-189, and 194–195 (HR) each bind substrate.

It belongs to the HAM1 NTPase family. As to quaternary structure, homodimer. Requires Mg(2+) as cofactor.

It catalyses the reaction XTP + H2O = XMP + diphosphate + H(+). It carries out the reaction dITP + H2O = dIMP + diphosphate + H(+). The catalysed reaction is ITP + H2O = IMP + diphosphate + H(+). Functionally, pyrophosphatase that catalyzes the hydrolysis of nucleoside triphosphates to their monophosphate derivatives, with a high preference for the non-canonical purine nucleotides XTP (xanthosine triphosphate), dITP (deoxyinosine triphosphate) and ITP. Seems to function as a house-cleaning enzyme that removes non-canonical purine nucleotides from the nucleotide pool, thus preventing their incorporation into DNA/RNA and avoiding chromosomal lesions. The polypeptide is dITP/XTP pyrophosphatase (Burkholderia mallei (strain ATCC 23344)).